Here is a 226-residue protein sequence, read N- to C-terminus: Thaumatin-like protein (226 aa).

Positions 1 to 24 (MNFSKNLPLLVSLWAITFFAYTHA) are cleaved as a signal peptide. Cystine bridges form between C33–C225, C74–C84, C89–C95, C140–C214, C145–C197, C153–C163, C167–C176, and C177–C184.

It belongs to the thaumatin family. As to expression, expressed in fruits.

The protein localises to the secreted. In terms of biological role, 3D-structure modeling suggests it may have endo-(1,3)-beta-glucanase activity. The sequence is that of Thaumatin-like protein from Olea europaea (Common olive).